We begin with the raw amino-acid sequence, 101 residues long: MTRKSIQEREKKRIKLAKTFLKKRKELKKIISDPNIGNDIRWNAVLKLQSLPRDSSLSRQRNRCSQTSRPHAFLRKFGLSRIKLREAAMRGEIPGLRKSSW.

Belongs to the universal ribosomal protein uS14 family. In terms of assembly, part of the 30S ribosomal subunit. Contacts proteins S3 and S10.

Functionally, binds 16S rRNA, required for the assembly of 30S particles and may also be responsible for determining the conformation of the 16S rRNA at the A site. This Wigglesworthia glossinidia brevipalpis protein is Small ribosomal subunit protein uS14.